Reading from the N-terminus, the 72-residue chain is BBSome-interacting protein 1 (72 aa).

This sequence belongs to the BBIP10 family.

Its subcellular location is the cell projection. The protein resides in the cilium. It localises to the cytoplasm. Required for primary cilia assembly. The polypeptide is BBSome-interacting protein 1 (bbip1) (Danio rerio (Zebrafish)).